The sequence spans 459 residues: LAS seventeen-binding protein 3 (459 aa).

Positions 219–403 (RPSNGGRGSF…APTSPSTSSP (185 aa)) are disordered. Phosphoserine is present on S227. A compositionally biased stretch (acidic residues) spans 229–242 (DDDEDDYYDDDDYY). Over residues 243-262 (NDIPSSFSSTDASSTRPNTR) the composition is skewed to low complexity. Polar residues predominate over residues 289-300 (YSRNSRLAPTNS). Position 298 is a phosphothreonine (T298). Residues S300 and S303 each carry the phosphoserine modification. Residues 340–350 (DEYDDYDDDYE) show a composition bias toward acidic residues. Residues 351 to 371 (SGYRRGNGRDRTKDREVDDLS) show a composition bias toward basic and acidic residues. Positions 372–391 (NRFSKSRISSASTPQTSQGR) are enriched in polar residues. T393 is modified (phosphothreonine). Residues 393–403 (TAPTSPSTSSP) are compositionally biased toward low complexity. Phosphoserine occurs at positions 397, 402, and 416. The SH3 domain maps to 400–459 (TSSPKAVALYSFAGEESGDLPFRKGDVITILKKSDSQNDWWTGRVNGREGIFPANYVELV).

Belongs to the SH3YL1 family. Interacts with LAS17. Phosphorylation of Ser-397 is induced 2-fold in response to mating pheromone.

It is found in the cytoplasm. The sequence is that of LAS seventeen-binding protein 3 (LSB3) from Saccharomyces cerevisiae (strain YJM789) (Baker's yeast).